The sequence spans 103 residues: MAAVTLSVSTVKPLGERVFVKVSESEEKTAGGILLPDSAKEKPQVGEVVSAGPGKRNDDGTRAEMEVKVGDKVLYSKYAGTDIKLGGDEYVLLAEKDILAIVN.

This sequence belongs to the GroES chaperonin family. As to quaternary structure, heptamer of 7 subunits arranged in a ring. Interacts with the chaperonin GroEL.

Its subcellular location is the cytoplasm. Functionally, together with the chaperonin GroEL, plays an essential role in assisting protein folding. The GroEL-GroES system forms a nano-cage that allows encapsulation of the non-native substrate proteins and provides a physical environment optimized to promote and accelerate protein folding. GroES binds to the apical surface of the GroEL ring, thereby capping the opening of the GroEL channel. In Trichodesmium erythraeum (strain IMS101), this protein is Co-chaperonin GroES.